The chain runs to 176 residues: MGFPKEGEKVQIHSYKHNGSIHRMWEETTILKGTQSLVIGANDRTVVTESDGRTWITREPAICYFHANYWFNVIGMLREEGVYYYCNLSSPFAYDSEALKYIDYDLDIKVYPDMTYTLLDEDEYEKHSQIMQYPPVIDTILKRNVAQLTQWIHQRKGPFAPDFVDMWYERYLMYRN.

R23 (proton donor) is an active-site residue. Mg(2+) contacts are provided by N87, D103, D105, D107, D120, and E123.

This sequence belongs to the Ntdp family. Mg(2+) serves as cofactor.

It catalyses the reaction a ribonucleoside 5'-triphosphate + H2O = a ribonucleoside 5'-diphosphate + phosphate + H(+). It carries out the reaction a ribonucleoside 5'-diphosphate + H2O = a ribonucleoside 5'-phosphate + phosphate + H(+). In terms of biological role, has nucleoside phosphatase activity towards nucleoside triphosphates and nucleoside diphosphates. This chain is Nucleoside triphosphate/diphosphate phosphatase, found in Bacillus cereus (strain AH820).